Reading from the N-terminus, the 205-residue chain is RFAHDPMAGGHRMWQMAGLKAQRAQTDVNNKQAAFDAAAKEKSDADAALSAAQERRKQKENKEKDAKDKLDKESKRNKPGKATGKGKPVGDKWLDDAGKDSGAPIPDRIADKLRDKEFKNFDDFRRKFWEEVSKDPELSKQFNPGNKKRLSQGLAPRARNKDTVGGRRSFELHHDKPISQDGGVYDMDNLRITTPKRHIDIHRGQ.

Disordered regions lie at residues 24 to 109 (AQTD…PDRI) and 136 to 187 (PELS…VYDM). Composition is skewed to basic and acidic residues over residues 53–76 (QERR…ESKR), 88–99 (PVGDKWLDDAGK), and 159–178 (RNKD…DKPI). Residues His173, His198, and His202 each contribute to the Zn(2+) site.

It belongs to the colicin/pyosin nuclease family.

This plasmid-coded bactericidal protein is an endonuclease active on both single- and double-stranded DNA but with undefined specificity. In terms of biological role, colicins are polypeptide toxins produced by and active against E.coli and closely related bacteria. The polypeptide is Colicin-E8 (col) (Escherichia coli).